The chain runs to 201 residues: Large ribosomal subunit protein uL4 (201 aa).

The segment at 43–73 (TRAQKTRSEVSGGGAKPWRQKGTGRARAGTT) is disordered.

The protein belongs to the universal ribosomal protein uL4 family. In terms of assembly, part of the 50S ribosomal subunit.

One of the primary rRNA binding proteins, this protein initially binds near the 5'-end of the 23S rRNA. It is important during the early stages of 50S assembly. It makes multiple contacts with different domains of the 23S rRNA in the assembled 50S subunit and ribosome. In terms of biological role, forms part of the polypeptide exit tunnel. This Colwellia psychrerythraea (strain 34H / ATCC BAA-681) (Vibrio psychroerythus) protein is Large ribosomal subunit protein uL4.